The following is a 157-amino-acid chain: SsrA-binding protein (157 aa).

It belongs to the SmpB family.

It is found in the cytoplasm. Required for rescue of stalled ribosomes mediated by trans-translation. Binds to transfer-messenger RNA (tmRNA), required for stable association of tmRNA with ribosomes. tmRNA and SmpB together mimic tRNA shape, replacing the anticodon stem-loop with SmpB. tmRNA is encoded by the ssrA gene; the 2 termini fold to resemble tRNA(Ala) and it encodes a 'tag peptide', a short internal open reading frame. During trans-translation Ala-aminoacylated tmRNA acts like a tRNA, entering the A-site of stalled ribosomes, displacing the stalled mRNA. The ribosome then switches to translate the ORF on the tmRNA; the nascent peptide is terminated with the 'tag peptide' encoded by the tmRNA and targeted for degradation. The ribosome is freed to recommence translation, which seems to be the essential function of trans-translation. This Methylobacterium nodulans (strain LMG 21967 / CNCM I-2342 / ORS 2060) protein is SsrA-binding protein.